Consider the following 461-residue polypeptide: GTPase Der (461 aa).

2 EngA-type G domains span residues 2-164 (QKII…EDDV) and 197-368 (IRVG…KNFT). GTP is bound by residues 8 to 15 (GKPNVGKS), 55 to 59 (DSGGL), 116 to 119 (NKID), 203 to 210 (GRVNVGKS), 250 to 254 (DTAGI), and 314 to 317 (NKWD). Positions 369–453 (QKIQTSKLNE…PIVLAPKKRG (85 aa)) constitute a KH-like domain.

This sequence belongs to the TRAFAC class TrmE-Era-EngA-EngB-Septin-like GTPase superfamily. EngA (Der) GTPase family. As to quaternary structure, associates with the 50S ribosomal subunit.

Its function is as follows. GTPase that plays an essential role in the late steps of ribosome biogenesis. The sequence is that of GTPase Der from Campylobacter curvus (strain 525.92).